A 781-amino-acid polypeptide reads, in one-letter code: Dual specificity protein kinase zakA (781 aa).

2 consecutive Protein kinase domains span residues 9–317 and 379–654; these read WEEI…HKLI and DKDD…EIGL. ATP-binding positions include 15–23 and lysine 44; that span reads IGEGQYGRV. Aspartate 132 serves as the catalytic Proton acceptor. A disordered region spans residues 168 to 209; sequence ETTNNNNNPNNNNNNNNNNNNNNNNNNNNNNNNNNINNINNN. The span at 171–209 shows a compositional bias: low complexity; that stretch reads NNNNNPNNNNNNNNNNNNNNNNNNNNNNNNNNINNINNN. ATP is bound by residues 385–393 and lysine 406; that span reads GGAGNFGDV. Aspartate 507 serves as the catalytic Proton acceptor.

This sequence in the N-terminal section; belongs to the protein kinase superfamily. Ser/Thr protein kinase family. The protein in the C-terminal section; belongs to the protein kinase superfamily. TKL Tyr protein kinase family. Post-translationally, N-terminal serine/threonine domain is capable of autophosphorylation, in vitro, but to a lower extent than the tyrosine kinase domain. May function as a negative regulator of the tyrosine kinase domain. In terms of processing, C-terminal tyrosine kinase domain is capable of autophosphorylation, in vitro. In terms of tissue distribution, zakA and zak2 are coexpressed in prestalk cell population, zakA is enriched in pstB populations and zak1 in pstA populations. ZakA and zak2 are coexpressed in prespore cells, zakA expression levels are 10 fold higher than zak2.

The catalysed reaction is L-seryl-[protein] + ATP = O-phospho-L-seryl-[protein] + ADP + H(+). It carries out the reaction L-threonyl-[protein] + ATP = O-phospho-L-threonyl-[protein] + ADP + H(+). The enzyme catalyses L-tyrosyl-[protein] + ATP = O-phospho-L-tyrosyl-[protein] + ADP + H(+). Functionally, positive regulator of gsk3/gskA activity required for cell pattern formation and a downstream effector of carC. The kinases, gsk3/gskA, zakA and zak2, form part of a signaling pathway that responds to extracellular cyclic AMP. The pathway has a role in transcriptional regulation; required to direct prespore/spore fates during development. ZakA negatively regulates prestalk differentiation by regulating expression of ecmB. Phosphorylates Y-214 of gsk3/gskA, in vitro. This chain is Dual specificity protein kinase zakA (zakA), found in Dictyostelium discoideum (Social amoeba).